The chain runs to 372 residues: Cytochrome b (372 aa).

A run of 4 helical transmembrane segments spans residues 25–45 (FGSM…FLAI), 69–90 (WIMQ…YIHI), 105–125 (WLSG…GYVL), and 170–190 (FFAL…IHIM). The heme b site is built by His-75 and His-89. Heme b is bound by residues His-174 and His-188. His-193 is a binding site for a ubiquinone. The next 4 membrane-spanning stretches (helical) occupy residues 218–238 (YKDM…LSFS), 280–300 (LGGT…PFTH), 312–332 (LSQI…WTAS), and 339–358 (FILI…IMAP).

The protein belongs to the cytochrome b family. As to quaternary structure, the cytochrome bc1 complex contains 3 respiratory subunits (MT-CYB, CYC1 and UQCRFS1), 2 core proteins (UQCRC1 and UQCRC2) and probably 6 low-molecular weight proteins. Heme b serves as cofactor.

It localises to the mitochondrion inner membrane. Component of the ubiquinol-cytochrome c reductase complex (complex III or cytochrome b-c1 complex) that is part of the mitochondrial respiratory chain. The b-c1 complex mediates electron transfer from ubiquinol to cytochrome c. Contributes to the generation of a proton gradient across the mitochondrial membrane that is then used for ATP synthesis. This Hemachatus haemachatus (Rinkhals) protein is Cytochrome b (MT-CYB).